Reading from the N-terminus, the 358-residue chain is Phosphate acyltransferase (358 aa).

Residues 336 to 358 (SAAGAAPASPETAPTPHPSTRAA) form a disordered region.

Belongs to the PlsX family. Homodimer. Probably interacts with PlsY.

The protein resides in the cytoplasm. It carries out the reaction a fatty acyl-[ACP] + phosphate = an acyl phosphate + holo-[ACP]. It functions in the pathway lipid metabolism; phospholipid metabolism. Catalyzes the reversible formation of acyl-phosphate (acyl-PO(4)) from acyl-[acyl-carrier-protein] (acyl-ACP). This enzyme utilizes acyl-ACP as fatty acyl donor, but not acyl-CoA. The polypeptide is Phosphate acyltransferase (Cupriavidus pinatubonensis (strain JMP 134 / LMG 1197) (Cupriavidus necator (strain JMP 134))).